The following is a 340-amino-acid chain: Ketol-acid reductoisomerase (NADP(+)) (340 aa).

Positions 1–182 (MRVYYDRDCD…GGGRSGIIET (182 aa)) constitute a KARI N-terminal Rossmann domain. Residues 24 to 27 (YGSQ), R48, S51, S53, and 83 to 86 (DELQ) contribute to the NADP(+) site. Residue H108 is part of the active site. Residue G134 participates in NADP(+) binding. Positions 183-329 (NFRQECETDL…EKLRGMMPWI (147 aa)) constitute a KARI C-terminal knotted domain. Residues D191, E195, E227, and E231 each coordinate Mg(2+). S252 contributes to the substrate binding site.

Belongs to the ketol-acid reductoisomerase family. The cofactor is Mg(2+).

The enzyme catalyses (2R)-2,3-dihydroxy-3-methylbutanoate + NADP(+) = (2S)-2-acetolactate + NADPH + H(+). It carries out the reaction (2R,3R)-2,3-dihydroxy-3-methylpentanoate + NADP(+) = (S)-2-ethyl-2-hydroxy-3-oxobutanoate + NADPH + H(+). It functions in the pathway amino-acid biosynthesis; L-isoleucine biosynthesis; L-isoleucine from 2-oxobutanoate: step 2/4. It participates in amino-acid biosynthesis; L-valine biosynthesis; L-valine from pyruvate: step 2/4. Its function is as follows. Involved in the biosynthesis of branched-chain amino acids (BCAA). Catalyzes an alkyl-migration followed by a ketol-acid reduction of (S)-2-acetolactate (S2AL) to yield (R)-2,3-dihydroxy-isovalerate. In the isomerase reaction, S2AL is rearranged via a Mg-dependent methyl migration to produce 3-hydroxy-3-methyl-2-ketobutyrate (HMKB). In the reductase reaction, this 2-ketoacid undergoes a metal-dependent reduction by NADPH to yield (R)-2,3-dihydroxy-isovalerate. The sequence is that of Ketol-acid reductoisomerase (NADP(+)) from Cereibacter sphaeroides (strain ATCC 17023 / DSM 158 / JCM 6121 / CCUG 31486 / LMG 2827 / NBRC 12203 / NCIMB 8253 / ATH 2.4.1.) (Rhodobacter sphaeroides).